A 256-amino-acid chain; its full sequence is Probable aquaporin TIP-type alpha (256 aa).

Topologically, residues 1 to 24 (MATRRYSFGRTDEATHPDSMRASL) are cytoplasmic. Serine 7 bears the Phosphoserine; by CPK mark. The chain crosses the membrane as a helical span at residues 25-44 (AEFASTFIFVFAGEGSGLAL). Topologically, residues 45 to 57 (VKIYQDSAFSAGE) are vacuolar. The helical transmembrane segment at 58–77 (LLALALAHAFALFAAVSASM) threads the bilayer. The Cytoplasmic segment spans residues 78–102 (HVSGGHVNPAVSFGALIGGRISVIR). An NPA 1 motif is present at residues 85 to 87 (NPA). A helical membrane pass occupies residues 103–121 (AVYYWIAQLLGSIVAALVL). Over 122 to 143 (RLVTNNMRPSGFHVSPGVGVGH) the chain is Vacuolar. A helical membrane pass occupies residues 144–164 (MFILEVVMTFGLMYTVYGTAI). Residues 165–169 (DPKRG) are Cytoplasmic-facing. A helical membrane pass occupies residues 170-189 (AVSYIAPLAIGLIVGANILV). Residues 190 to 216 (GGPFDGACMNPALAFGPSLVGWQWHQH) are Vacuolar-facing. The NPA 2 motif lies at 199-201 (NPA). Residues 217 to 239 (WIFWVGPLLGAALAALVYEYAVI) traverse the membrane as a helical segment. Residues 240-256 (PIEPPPHHHQPLATEDY) are Cytoplasmic-facing.

It belongs to the MIP/aquaporin (TC 1.A.8) family. TIP (TC 1.A.8.10) subfamily. Phosphorylated by a tonoplast-bound calcium-dependent protein kinase. As to expression, found in all seed tissues that are alive at seed maturity, but not in tissues that lose viability during seed maturation.

The protein localises to the vacuole membrane. Its function is as follows. Channel protein in tonoplast. These proteins may allow the diffusion of amino acids and/or peptides from the vacuolar compartment to the cytoplasm. The polypeptide is Probable aquaporin TIP-type alpha (Phaseolus vulgaris (Kidney bean)).